A 288-amino-acid polypeptide reads, in one-letter code: Transposase for insertion sequence element IS1106 (288 aa).

Belongs to the transposase 11 family.

Involved in the transposition of the insertion sequence. The polypeptide is Transposase for insertion sequence element IS1106 (Neisseria meningitidis serogroup B).